Reading from the N-terminus, the 117-residue chain is Large ribosomal subunit protein bL20 (117 aa).

It belongs to the bacterial ribosomal protein bL20 family.

Functionally, binds directly to 23S ribosomal RNA and is necessary for the in vitro assembly process of the 50S ribosomal subunit. It is not involved in the protein synthesizing functions of that subunit. The sequence is that of Large ribosomal subunit protein bL20 from Histophilus somni (strain 129Pt) (Haemophilus somnus).